A 258-amino-acid chain; its full sequence is MIIDFKKYSSVRIGNEFEVLVLDQICDFDGFLIGGANNLLISPKPKNIGILGDGFDFMQILDQNKDFIHLRIGCKTKSSKIYRFAKENNLKGFEYLSKIPGTLGGLLKMNAGLKGECISQNLIKIATSQGEILRENINFDYRFCPLNMPFFWAEFKLNFGFDTLKDEALKNARSNQPSGASFGSIFKNPKNDFAGRLIEAVGLKGFSKGDAMLSDKHANFLINKKNASFEDAFFLIELARKKVFEEFGINLENEVIII.

R142 is an active-site residue. Residue S184 is the Proton donor of the active site. E254 is an active-site residue.

The protein belongs to the MurB family. FAD serves as cofactor.

The protein localises to the cytoplasm. The enzyme catalyses UDP-N-acetyl-alpha-D-muramate + NADP(+) = UDP-N-acetyl-3-O-(1-carboxyvinyl)-alpha-D-glucosamine + NADPH + H(+). It participates in cell wall biogenesis; peptidoglycan biosynthesis. Functionally, cell wall formation. The polypeptide is UDP-N-acetylenolpyruvoylglucosamine reductase (Campylobacter jejuni (strain RM1221)).